Reading from the N-terminus, the 487-residue chain is COP9 signalosome complex subunit 1 (487 aa).

The tract at residues 103-123 (REVQNAPDAVPEGSMEPPALD) is disordered. Positions 265 to 427 (CFLLASFDHC…KILYARDVDQ (163 aa)) constitute a PCI domain. The interval 461 to 487 (HVKSPPREGSQGELTPANSQSRLSTNM) is disordered. A compositionally biased stretch (polar residues) spans 472 to 487 (GELTPANSQSRLSTNM).

Belongs to the CSN1 family. In terms of assembly, component of the CSN complex, probably composed of cops1, cops2, cops3, cops4, cops5, cops6, cops7, cops8 and cops9.

Its subcellular location is the cytoplasm. It is found in the nucleus. Essential component of the COP9 signalosome complex (CSN), a complex involved in various cellular and developmental processes. The CSN complex is an essential regulator of the ubiquitin (Ubl) conjugation pathway by mediating the deneddylation of the cullin subunits of E3 ligase complexes, leading to modify the Ubl ligase activity. This is COP9 signalosome complex subunit 1 (csn1) from Xenopus laevis (African clawed frog).